The primary structure comprises 238 residues: Ubiquinone biosynthesis O-methyltransferase (238 aa).

S-adenosyl-L-methionine is bound by residues arginine 40, glycine 59, aspartate 80, and methionine 124.

It belongs to the methyltransferase superfamily. UbiG/COQ3 family.

The catalysed reaction is a 3-demethylubiquinol + S-adenosyl-L-methionine = a ubiquinol + S-adenosyl-L-homocysteine + H(+). It catalyses the reaction a 3-(all-trans-polyprenyl)benzene-1,2-diol + S-adenosyl-L-methionine = a 2-methoxy-6-(all-trans-polyprenyl)phenol + S-adenosyl-L-homocysteine + H(+). The protein operates within cofactor biosynthesis; ubiquinone biosynthesis. In terms of biological role, O-methyltransferase that catalyzes the 2 O-methylation steps in the ubiquinone biosynthetic pathway. In Ralstonia nicotianae (strain ATCC BAA-1114 / GMI1000) (Ralstonia solanacearum), this protein is Ubiquinone biosynthesis O-methyltransferase.